We begin with the raw amino-acid sequence, 1059 residues long: DNA-directed RNA polymerase subunit beta (1059 aa).

It belongs to the RNA polymerase beta chain family. In plastids the minimal PEP RNA polymerase catalytic core is composed of four subunits: alpha, beta, beta', and beta''. When a (nuclear-encoded) sigma factor is associated with the core the holoenzyme is formed, which can initiate transcription (Potential).

Its subcellular location is the plastid. The protein resides in the apicoplast. The enzyme catalyses RNA(n) + a ribonucleoside 5'-triphosphate = RNA(n+1) + diphosphate. Its function is as follows. DNA-dependent RNA polymerase catalyzes the transcription of DNA into RNA using the four ribonucleoside triphosphates as substrates. The protein is DNA-directed RNA polymerase subunit beta (rpoB) of Eimeria tenella (Coccidian parasite).